We begin with the raw amino-acid sequence, 193 residues long: Achaete-scute homolog 2 (193 aa).

3 disordered regions span residues 1 to 27 (MDGGTLPRSAPPAPPVPVGCAARRRPA), 37 to 56 (RRRPATAETGGGAAAVARRN), and 118 to 177 (GGLR…GALS). The bHLH domain occupies 50–102 (AAVARRNERERNRVKLVNLGFQALRQHVPHGGASKKLSKVETLRSAVEYIRAL). A compositionally biased stretch (low complexity) spans 140-150 (AASPSRASSSP).

In terms of assembly, efficient DNA binding requires dimerization with another basic helix-loop-helix (bHLH) protein. Forms heterodimers with bHLH transcription factor TCF3. May not heterodimerise with bHLH protein HAND1. In terms of tissue distribution, expressed in the placenta at a stage between the first and second trimesters and when it matures, at about 32-36 weeks. Expressed in the extravillous trophoblasts, the intermediate trophoblasts, and at lower levels in the cytotrophoblasts and stroma of chorionic villi of the developing placenta. Expressed in follicular T-helper (Tfh) cells.

It is found in the nucleus. In terms of biological role, transcription factor. Binds to E-box motifs 5'-CANNTG-3' in the regulatory elements of target genes, probably as a heterodimer with another basic helix-loop-helix (bHLH) protein such as the transcription factor TCF3. May bind both open and closed chromatin, acting as a pioneer transcription factor to allow other factors to bind and activate lineage-specific genes. Required during post-implantation development for the generation of some differentiated trophoblast cell types. Transcriptional activity of ASCL2 may be antagonised in a subset of trophoblast cells by bHLH transcription factor HAND1, perhaps by competing for dimerization with other bHLH proteins. Involved in differentiation and function of follicular T-helper (Tfh) cells, thereby playing a role in germinal center responses; probably modulates expression of genes involved in Tfh cell function, such as BCL6. May also act as a suppressor of Th1-, Th2- and Th17-cell differentiation. Induces the formation of stem cells in intestinal crypts in vitro, synergistically activating transcription of target genes, such as SOX9, together with TCF4/beta-catenin. May form a bistable transcriptional switch, controlling expression of its own gene together with Wnt/R-spondin signaling, and thereby maintaining stem cell characteristics. Modulates expression of target genes, including perhaps down-regulating EGR1/Krox24 and chemokine CXCL10/Mob-1 and up-regulating CXCR4 and CDKN1C/p57kip2, in Schwann cells. May play a role in reducing proliferation of Schwann cells, perhaps acting via modulation of expression of CDKN1C. May be dispensable for blastocyst formation and later embryonic function. May be involved in the determination of neuronal precursors. This chain is Achaete-scute homolog 2 (ASCL2), found in Homo sapiens (Human).